A 754-amino-acid chain; its full sequence is Endothelin-converting enzyme 1 (754 aa).

At 1–52 the chain is on the cytoplasmic side; sequence MMSTYKRATLDEEDLVDSLSEGEVYPNGLQVNFRNFRSSQRCWATRTQVEKR. Position 9 is a phosphothreonine (threonine 9). A helical; Signal-anchor for type II membrane protein transmembrane segment spans residues 53 to 73; it reads LIVLVALLAAGLVACLTALGI. Topologically, residues 74–754 are extracellular; it reads QYRTRTPPVC…MNPRHKCEVW (681 aa). The region spanning 82–754 is the Peptidase M13 domain; that stretch reads VCLSEACVSV…MNPRHKCEVW (673 aa). 5 cysteine pairs are disulfide-bonded: cysteine 83/cysteine 88, cysteine 106/cysteine 739, cysteine 114/cysteine 699, cysteine 169/cysteine 419, and cysteine 628/cysteine 751. N-linked (GlcNAc...) asparagine glycosylation is found at asparagine 150, asparagine 171, asparagine 194, asparagine 254, asparagine 300, asparagine 346, asparagine 367, and asparagine 523. Histidine 591 contributes to the Zn(2+) binding site. The active site involves glutamate 592. Histidine 595 lines the Zn(2+) pocket. Residues asparagine 616 and asparagine 635 are each glycosylated (N-linked (GlcNAc...) asparagine). Glutamate 651 is a Zn(2+) binding site. Aspartate 655 serves as the catalytic Proton donor.

This sequence belongs to the peptidase M13 family. As to quaternary structure, homodimer; disulfide-linked. Interacts with PPP1R16B. Interacts with TSPAN8; this interaction recruits the endothelin converting enzyme ECE1 to tetraspanin-enriched microdomains and positively modulates its enzymatic activity. Zn(2+) serves as cofactor.

It is found in the cell membrane. It carries out the reaction Hydrolysis of the 21-Trp-|-Val-22 bond in big endothelin to form endothelin 1.. Its activity is regulated as follows. Inhibited by phosphoramidon. In terms of biological role, converts big endothelin-1 to endothelin-1. This chain is Endothelin-converting enzyme 1 (ECE1), found in Cavia porcellus (Guinea pig).